We begin with the raw amino-acid sequence, 290 residues long: Large ribosomal subunit protein uL3 (290 aa).

The residue at position 152 (Q152) is an N5-methylglutamine. Positions 250-290 (ARLAEEQAAAEAESLAQAEAEIAAEGSDAAPEGDADKKDGE) are disordered. Residues 255 to 274 (EQAAAEAESLAQAEAEIAAE) are compositionally biased toward low complexity.

It belongs to the universal ribosomal protein uL3 family. In terms of assembly, part of the 50S ribosomal subunit. Forms a cluster with proteins L14 and L19. Methylated by PrmB.

Its function is as follows. One of the primary rRNA binding proteins, it binds directly near the 3'-end of the 23S rRNA, where it nucleates assembly of the 50S subunit. This Jannaschia sp. (strain CCS1) protein is Large ribosomal subunit protein uL3.